The chain runs to 184 residues: Small ribosomal subunit protein bS16 (184 aa).

Residues 150–160 show a composition bias toward basic and acidic residues; it reads KKAAEAAEKAA. The disordered stretch occupies residues 150 to 184; the sequence is KKAAEAAEKAAAEAPAEEATEAPAEEAAATEAAAE. The segment covering 164–173 has biased composition (acidic residues); it reads PAEEATEAPA. Residues 174 to 184 are compositionally biased toward low complexity; the sequence is EEAAATEAAAE.

The protein belongs to the bacterial ribosomal protein bS16 family.

In Bacteroides thetaiotaomicron (strain ATCC 29148 / DSM 2079 / JCM 5827 / CCUG 10774 / NCTC 10582 / VPI-5482 / E50), this protein is Small ribosomal subunit protein bS16.